The primary structure comprises 60 residues: Large ribosomal subunit protein eL37 (60 aa).

Zn(2+) is bound by residues cysteine 19, cysteine 22, cysteine 34, and cysteine 37. The segment at 19 to 37 (CRRCGRISFHAQKKVCSSC) adopts a C4-type zinc-finger fold.

The protein belongs to the eukaryotic ribosomal protein eL37 family. Zn(2+) serves as cofactor.

Its function is as follows. Binds to the 23S rRNA. The sequence is that of Large ribosomal subunit protein eL37 from Methanoregula boonei (strain DSM 21154 / JCM 14090 / 6A8).